We begin with the raw amino-acid sequence, 427 residues long: Peptidase B (427 aa).

Mn(2+) is bound by residues lysine 195 and aspartate 200. Lysine 207 is an active-site residue. Mn(2+) contacts are provided by aspartate 218, aspartate 277, and glutamate 279. Residue arginine 281 is part of the active site.

Belongs to the peptidase M17 family. Homohexamer. Mn(2+) is required as a cofactor.

It localises to the cytoplasm. It catalyses the reaction Release of an N-terminal amino acid, Xaa, from a peptide or arylamide. Xaa is preferably Glu or Asp but may be other amino acids, including Leu, Met, His, Cys and Gln.. In terms of biological role, probably plays an important role in intracellular peptide degradation. The polypeptide is Peptidase B (Escherichia coli (strain SE11)).